The following is a 308-amino-acid chain: MSKLIYGLAGPTASGKTSLSILLAKKINAEIISVDSSLVYKGMDIGTAKPTLQEQDGIKHHLIDIIEPTGNFSVADFISSVNKLKKEIWARGREVLLVGGTMLYFKGLIEGLSALPESQAEIREALEYQKKAKGLQYLHQQLNEIDPQSAQKINPNDQQRIFRALEVIMISGKKYSELVKTSKVGGLDEDLKLCALVPNDRSILHKNIESRFRQMLDQGFLDEVQNLHKNPMLTKETTAIRSVGYRQAWEYLDGDISYDEFVKKGIVATRQLAKRQLTWIRNWQSSINIVAMENETKELDILKYFGYK.

10-17 (GPTASGKT) lines the ATP pocket. A substrate-binding site is contributed by 12–17 (TASGKT). Interaction with substrate tRNA stretches follow at residues 35 to 38 (DSSL) and 159 to 163 (QRIFR).

Belongs to the IPP transferase family. Monomer. Requires Mg(2+) as cofactor.

The catalysed reaction is adenosine(37) in tRNA + dimethylallyl diphosphate = N(6)-dimethylallyladenosine(37) in tRNA + diphosphate. Catalyzes the transfer of a dimethylallyl group onto the adenine at position 37 in tRNAs that read codons beginning with uridine, leading to the formation of N6-(dimethylallyl)adenosine (i(6)A). This chain is tRNA dimethylallyltransferase, found in Francisella tularensis subsp. tularensis (strain FSC 198).